We begin with the raw amino-acid sequence, 425 residues long: Glutamyl-tRNA reductase (425 aa).

Substrate is bound by residues 49–52 (TCNR), serine 107, 112–114 (EPQ), and glutamine 118. Cysteine 50 serves as the catalytic Nucleophile. 187–192 (GAGETI) contributes to the NADP(+) binding site.

The protein belongs to the glutamyl-tRNA reductase family. In terms of assembly, homodimer.

It carries out the reaction (S)-4-amino-5-oxopentanoate + tRNA(Glu) + NADP(+) = L-glutamyl-tRNA(Glu) + NADPH + H(+). The protein operates within porphyrin-containing compound metabolism; protoporphyrin-IX biosynthesis; 5-aminolevulinate from L-glutamyl-tRNA(Glu): step 1/2. In terms of biological role, catalyzes the NADPH-dependent reduction of glutamyl-tRNA(Glu) to glutamate 1-semialdehyde (GSA). The polypeptide is Glutamyl-tRNA reductase (Pseudomonas savastanoi pv. phaseolicola (strain 1448A / Race 6) (Pseudomonas syringae pv. phaseolicola (strain 1448A / Race 6))).